We begin with the raw amino-acid sequence, 334 residues long: Holliday junction branch migration complex subunit RuvB (334 aa).

The segment at 4-184 (ADRLIQPQLQ…FGIPLRLEFY (181 aa)) is large ATPase domain (RuvB-L). Residues R24, G65, K68, T69, T70, 131-133 (EDY), R174, Y184, and R221 contribute to the ATP site. Residue T69 coordinates Mg(2+). The segment at 185 to 255 (NVKDLSTIVT…VAELALNLLD (71 aa)) is small ATPAse domain (RuvB-S). The segment at 258–334 (GEGFDYMDRK…YVHFGMIKPE (77 aa)) is head domain (RuvB-H). DNA is bound by residues R294, R313, and R318.

It belongs to the RuvB family. In terms of assembly, homohexamer. Forms an RuvA(8)-RuvB(12)-Holliday junction (HJ) complex. HJ DNA is sandwiched between 2 RuvA tetramers; dsDNA enters through RuvA and exits via RuvB. An RuvB hexamer assembles on each DNA strand where it exits the tetramer. Each RuvB hexamer is contacted by two RuvA subunits (via domain III) on 2 adjacent RuvB subunits; this complex drives branch migration. In the full resolvosome a probable DNA-RuvA(4)-RuvB(12)-RuvC(2) complex forms which resolves the HJ.

It localises to the cytoplasm. It carries out the reaction ATP + H2O = ADP + phosphate + H(+). Its function is as follows. The RuvA-RuvB-RuvC complex processes Holliday junction (HJ) DNA during genetic recombination and DNA repair, while the RuvA-RuvB complex plays an important role in the rescue of blocked DNA replication forks via replication fork reversal (RFR). RuvA specifically binds to HJ cruciform DNA, conferring on it an open structure. The RuvB hexamer acts as an ATP-dependent pump, pulling dsDNA into and through the RuvAB complex. RuvB forms 2 homohexamers on either side of HJ DNA bound by 1 or 2 RuvA tetramers; 4 subunits per hexamer contact DNA at a time. Coordinated motions by a converter formed by DNA-disengaged RuvB subunits stimulates ATP hydrolysis and nucleotide exchange. Immobilization of the converter enables RuvB to convert the ATP-contained energy into a lever motion, pulling 2 nucleotides of DNA out of the RuvA tetramer per ATP hydrolyzed, thus driving DNA branch migration. The RuvB motors rotate together with the DNA substrate, which together with the progressing nucleotide cycle form the mechanistic basis for DNA recombination by continuous HJ branch migration. Branch migration allows RuvC to scan DNA until it finds its consensus sequence, where it cleaves and resolves cruciform DNA. This is Holliday junction branch migration complex subunit RuvB from Shewanella oneidensis (strain ATCC 700550 / JCM 31522 / CIP 106686 / LMG 19005 / NCIMB 14063 / MR-1).